Here is an 896-residue protein sequence, read N- to C-terminus: Zinc finger protein 574 (896 aa).

3 consecutive C2H2-type zinc fingers follow at residues 16-38 (YVCS…QNSH), 76-98 (YQCL…QELH), and 126-148 (YECV…RQTH). S164 is modified (phosphoserine). The segment at 214–236 (YKCSECSQLFQLPADFLEHQATH) adopts a C2H2-type 4 zinc-finger fold. The disordered stretch occupies residues 239–301 (APVPESQEPA…RARRNNSGEA (63 aa)). Residues 247–257 (PALQQEVQASS) show a composition bias toward polar residues. Residues 274–287 (HSYELRNGEAIGRD) show a composition bias toward basic and acidic residues. Residue S298 is modified to Phosphoserine. C2H2-type zinc fingers lie at residues 309–331 (LFCS…LRSH), 336–358 (FKCP…LGDH), 364–386 (FLCV…RRAH), and 392–413 (HSCP…RRTH). The segment at 434–460 (FPEPAPAETGEPEAPEPPVSEETSAGP) is disordered. C2H2-type zinc fingers lie at residues 466–489 (YRCL…RFVH), 495–517 (HKCS…LRTH), 523–545 (FPCP…RLTH), 551–573 (YRCG…RLVH), 579–601 (YRCQ…RYHH), and 607–630 (YKCR…LVVH). Residues 636 to 659 (HRCPSCGAAFPSSLRLREHRCAAA) form a C2H2-type 15; degenerate zinc finger. The segment at 667-689 (FECGTCGKKVGSAARLQAHEAAH) adopts a C2H2-type 16 zinc-finger fold. The disordered stretch occupies residues 687 to 733 (AAHAAAGPGEVLAKEPPAPRAPRATRAPVASPAGLGGTATASPAAPA). Residues 707-732 (APRATRAPVASPAGLGGTATASPAAP) are compositionally biased toward low complexity. Position 717 is a phosphoserine (S717). The residue at position 724 (T724) is a Phosphothreonine. Residue S728 is modified to Phosphoserine. 4 C2H2-type zinc fingers span residues 738–760 (LECS…RRIH), 766–788 (YPCP…RRLH), 794–816 (FACE…RRIH), and 822–844 (YSCP…RKTH). Residue R832 is modified to Asymmetric dimethylarginine.

The protein belongs to the krueppel C2H2-type zinc-finger protein family.

It is found in the nucleus. Its function is as follows. May be involved in transcriptional regulation. In Macaca fascicularis (Crab-eating macaque), this protein is Zinc finger protein 574 (ZNF574).